A 147-amino-acid chain; its full sequence is Ribonuclease VapC43 (147 aa).

The PINc domain maps to 3–139 (CVDVNVLVYA…ARFRRLRWRH (137 aa)). The Mg(2+) site is built by Asp-5 and Asp-108.

This sequence belongs to the PINc/VapC protein family. It depends on Mg(2+) as a cofactor.

Toxic component of a type II toxin-antitoxin (TA) system. An RNase. Its toxic effect is neutralized by coexpression with cognate antitoxin VapB43. This Mycobacterium tuberculosis (strain CDC 1551 / Oshkosh) protein is Ribonuclease VapC43.